We begin with the raw amino-acid sequence, 557 residues long: MFS-type transporter clz4 (557 aa).

Transmembrane regions (helical) follow at residues 22-42 (LIIV…DHNG), 59-79 (SITW…VLYG), 89-109 (ALFV…GFAT), 120-140 (LTGA…TDVV), 150-170 (AVVA…AAGV), 179-199 (GLFW…GYIL), 217-237 (WLGS…VSGP), 245-265 (SLLV…FLFI), 269-289 (LATL…SALL), 319-339 (VISG…SMIA), 346-366 (SGQY…GSLL), 379-399 (VIIV…PMVI), 419-439 (FFRF…LQST), and 479-499 (HVYI…FVWK). Basic and acidic residues predominate over residues 505-523 (SRPTENNDDIEHAPARGIE). The tract at residues 505–557 (SRPTENNDDIEHAPARGIEREDEQSSLIYDREPSAVSYGTVEAGEPNRLRRGG) is disordered.

It belongs to the major facilitator superfamily. TCR/Tet family.

The protein localises to the membrane. MFS-type transporter; part of the gene cluster that mediates the biosynthesis of squalestatin S1 (SQS1, also known as zaragozic acid A), a heavily oxidized fungal polyketide that offers potent cholesterol lowering activity by targeting squalene synthase (SS). The protein is MFS-type transporter clz4 of Cochliobolus lunatus (Filamentous fungus).